The chain runs to 78 residues: D-alanyl carrier protein (78 aa).

Residues 1–78 enclose the Carrier domain; the sequence is MEFRDQVLDL…KIVAVLEELR (78 aa). O-(pantetheine 4'-phosphoryl)serine is present on serine 36.

It belongs to the DltC family. 4'-phosphopantetheine is transferred from CoA to a specific serine of apo-DCP.

It is found in the cytoplasm. It functions in the pathway cell wall biogenesis; lipoteichoic acid biosynthesis. In terms of biological role, carrier protein involved in the D-alanylation of lipoteichoic acid (LTA). The loading of thioester-linked D-alanine onto DltC is catalyzed by D-alanine--D-alanyl carrier protein ligase DltA. The DltC-carried D-alanyl group is further transferred to cell membrane phosphatidylglycerol (PG) by forming an ester bond, probably catalyzed by DltD. D-alanylation of LTA plays an important role in modulating the properties of the cell wall in Gram-positive bacteria, influencing the net charge of the cell wall. This Staphylococcus saprophyticus subsp. saprophyticus (strain ATCC 15305 / DSM 20229 / NCIMB 8711 / NCTC 7292 / S-41) protein is D-alanyl carrier protein.